We begin with the raw amino-acid sequence, 539 residues long: T-complex protein 1 subunit zeta (539 aa).

This sequence belongs to the TCP-1 chaperonin family. In terms of assembly, heterooligomeric complex of about 850 to 900 kDa that forms two stacked rings, 12 to 16 nm in diameter.

It localises to the cytoplasm. In terms of biological role, molecular chaperone; assists the folding of proteins upon ATP hydrolysis. Known to play a role, in vitro, in the folding of actin and tubulin. This is T-complex protein 1 subunit zeta (cct-6) from Caenorhabditis elegans.